The following is a 331-amino-acid chain: Ferredoxin--NADP reductase 2 (331 aa).

7 residues coordinate FAD: E37, Q45, Y50, V90, F124, D286, and T327.

The protein belongs to the ferredoxin--NADP reductase type 2 family. As to quaternary structure, homodimer. The cofactor is FAD.

The catalysed reaction is 2 reduced [2Fe-2S]-[ferredoxin] + NADP(+) + H(+) = 2 oxidized [2Fe-2S]-[ferredoxin] + NADPH. The polypeptide is Ferredoxin--NADP reductase 2 (Listeria monocytogenes serotype 4b (strain F2365)).